The sequence spans 107 residues: Glutaredoxin 4 (107 aa).

The 103-residue stretch at Leu-4 to His-106 folds into the Glutaredoxin domain. Lys-21 contributes to the glutathione binding site. Cys-29 provides a ligand contact to [2Fe-2S] cluster. Residues Arg-58, Phe-70, and Cys-83–Asp-84 each bind glutathione.

It belongs to the glutaredoxin family. Monothiol subfamily. As to quaternary structure, homodimer.

Its subcellular location is the cytoplasm. In terms of biological role, monothiol glutaredoxin involved in the biogenesis of iron-sulfur clusters. The protein is Glutaredoxin 4 (grxD) of Haemophilus influenzae (strain ATCC 51907 / DSM 11121 / KW20 / Rd).